The chain runs to 344 residues: MTPLTLALDVMGGDFGPAVTVPAALQALNSDPHLHLLLVGDPDAITPLLARADFEQRSRLQIIAAESVIASDVRPSQAVRNSRGSSMRIALELVKEGRAQACISAGNTGALMGLAKLLLKPVDGIERPALVTVLPHQQKGKTVVLDLGANVDCDSTMLAQFAIMGSVMAEEALGIENPRVALLNIGEEETKGLDSIRDAAALLKTVPSLNYIGYLEANELLTGKTDVLVCDGFVGNVTLKTMEGVVRMFLSLLKSQGEGKKRSWWWLLLKRWLQKSLSRRFSHLNPDQYNGACLLGLRGTVIKSHGAANQRAFAVAIEQAVQAVQRQVPQRIAARLESVLPKSD.

This sequence belongs to the PlsX family. As to quaternary structure, homodimer. Probably interacts with PlsY.

The protein resides in the cytoplasm. It catalyses the reaction a fatty acyl-[ACP] + phosphate = an acyl phosphate + holo-[ACP]. It participates in lipid metabolism; phospholipid metabolism. In terms of biological role, catalyzes the reversible formation of acyl-phosphate (acyl-PO(4)) from acyl-[acyl-carrier-protein] (acyl-ACP). This enzyme utilizes acyl-ACP as fatty acyl donor, but not acyl-CoA. The chain is Phosphate acyltransferase from Cronobacter sakazakii (strain ATCC BAA-894) (Enterobacter sakazakii).